Reading from the N-terminus, the 892-residue chain is DNA mismatch repair protein MutS (892 aa).

607–614 (GPNMSGKS) provides a ligand contact to ATP. Residues 833–854 (EESQLSFFGGEQSPKKQDKPVL) are disordered. Over residues 845 to 854 (SPKKQDKPVL) the composition is skewed to basic and acidic residues.

The protein belongs to the DNA mismatch repair MutS family.

Functionally, this protein is involved in the repair of mismatches in DNA. It is possible that it carries out the mismatch recognition step. This protein has a weak ATPase activity. The polypeptide is DNA mismatch repair protein MutS (Bacillus cereus (strain Q1)).